Reading from the N-terminus, the 158-residue chain is Lipoprotein signal peptidase (158 aa).

4 consecutive transmembrane segments (helical) span residues 7–27 (LFWI…YWVV), 38–58 (LLTG…FSLL), 68–88 (LSLG…TLNL), and 92–112 (LGYG…FVLG). Active-site residues include Asp-116 and Asp-132. Residues 125–145 (FPVFNVADSFISIGIVFLLIA) traverse the membrane as a helical segment.

Belongs to the peptidase A8 family.

The protein localises to the cell inner membrane. It carries out the reaction Release of signal peptides from bacterial membrane prolipoproteins. Hydrolyzes -Xaa-Yaa-Zaa-|-(S,diacylglyceryl)Cys-, in which Xaa is hydrophobic (preferably Leu), and Yaa (Ala or Ser) and Zaa (Gly or Ala) have small, neutral side chains.. It functions in the pathway protein modification; lipoprotein biosynthesis (signal peptide cleavage). In terms of biological role, this protein specifically catalyzes the removal of signal peptides from prolipoproteins. In Nostoc punctiforme (strain ATCC 29133 / PCC 73102), this protein is Lipoprotein signal peptidase.